We begin with the raw amino-acid sequence, 301 residues long: Protein p34 (301 aa).

A run of 5 helical transmembrane segments spans residues Tyr15–Thr35, Ile40–Ala60, Thr83–Val103, Thr120–Ile140, and Leu171–Phe191.

This sequence belongs to the cation diffusion facilitator (CDF) transporter (TC 2.A.4) family.

It is found in the cell membrane. This is Protein p34 (p34) from Rickettsia rickettsii (strain Sheila Smith).